Reading from the N-terminus, the 432-residue chain is UDP-N-acetylmuramate--L-alanine ligase (432 aa).

ATP is bound at residue 108 to 114 (GAHGKTS).

It belongs to the MurCDEF family.

The protein localises to the cytoplasm. The catalysed reaction is UDP-N-acetyl-alpha-D-muramate + L-alanine + ATP = UDP-N-acetyl-alpha-D-muramoyl-L-alanine + ADP + phosphate + H(+). Its pathway is cell wall biogenesis; peptidoglycan biosynthesis. Cell wall formation. This chain is UDP-N-acetylmuramate--L-alanine ligase, found in Bacillus pumilus (strain SAFR-032).